We begin with the raw amino-acid sequence, 503 residues long: Maturase K (503 aa).

This sequence belongs to the intron maturase 2 family. MatK subfamily.

It localises to the plastid. The protein localises to the chloroplast. Functionally, usually encoded in the trnK tRNA gene intron. Probably assists in splicing its own and other chloroplast group II introns. This Rhamnus cathartica (Common buckthorn) protein is Maturase K.